We begin with the raw amino-acid sequence, 68 residues long: Small integral membrane protein 10-like protein 3 (68 aa).

The protein is Small integral membrane protein 10-like protein 3 of Homo sapiens (Human).